Consider the following 263-residue polypeptide: Shikimate dehydrogenase (NADP(+)) (263 aa).

Residues S16–S18 and T65 contribute to the shikimate site. K69 (proton acceptor) is an active-site residue. N90 and D105 together coordinate shikimate. NADP(+) contacts are provided by residues G125–S129 and L208. Y210 is a shikimate binding site. G230 is a binding site for NADP(+).

It belongs to the shikimate dehydrogenase family. Homodimer.

The enzyme catalyses shikimate + NADP(+) = 3-dehydroshikimate + NADPH + H(+). The protein operates within metabolic intermediate biosynthesis; chorismate biosynthesis; chorismate from D-erythrose 4-phosphate and phosphoenolpyruvate: step 4/7. Its function is as follows. Involved in the biosynthesis of the chorismate, which leads to the biosynthesis of aromatic amino acids. Catalyzes the reversible NADPH linked reduction of 3-dehydroshikimate (DHSA) to yield shikimate (SA). This chain is Shikimate dehydrogenase (NADP(+)), found in Helicobacter pylori (strain P12).